The following is a 119-amino-acid chain: DLTQFGNMINKMGQSVFDYIYYGCYCGWGGQGKPRDATDRCCFVHDCCYGKMGTYDTKWTSYKYEFQDGDIICGDKDPQKKELCECDRVAAICFANSRNTYNSKYFGYSSSKCTETEQC.

The Ca(2+) site is built by tyrosine 25, glycine 27, and glycine 29. Histidine 45 is an active-site residue. Aspartate 46 serves as a coordination point for Ca(2+). Residue aspartate 87 is part of the active site.

Belongs to the phospholipase A2 family. Group II subfamily. D49 sub-subfamily. Ca(2+) is required as a cofactor. Post-translationally, contains 6 disulfide bonds. In terms of tissue distribution, expressed by the venom gland.

It localises to the secreted. The catalysed reaction is a 1,2-diacyl-sn-glycero-3-phosphocholine + H2O = a 1-acyl-sn-glycero-3-phosphocholine + a fatty acid + H(+). Its function is as follows. PLA2 catalyzes the calcium-dependent hydrolysis of the 2-acyl groups in 3-sn-phosphoglycerides. The polypeptide is Acidic phospholipase A2 CM-II (Bitis nasicornis (Rhinoceros adder)).